The following is a 613-amino-acid chain: ATP-dependent zinc metalloprotease FtsH (613 aa).

The Cytoplasmic portion of the chain corresponds to M1–N4. Residues L5–S25 form a helical membrane-spanning segment. Over D26–L98 the chain is Extracellular. Residues L99–F119 form a helical membrane-spanning segment. Residues M120–I613 are Cytoplasmic-facing. G192 to T199 is a binding site for ATP. H414 contacts Zn(2+). Residue E415 is part of the active site. Zn(2+) contacts are provided by H418 and D492.

It in the central section; belongs to the AAA ATPase family. This sequence in the C-terminal section; belongs to the peptidase M41 family. As to quaternary structure, homohexamer. Zn(2+) is required as a cofactor.

Its subcellular location is the cell membrane. Acts as a processive, ATP-dependent zinc metallopeptidase for both cytoplasmic and membrane proteins. Plays a role in the quality control of integral membrane proteins. This is ATP-dependent zinc metalloprotease FtsH from Buchnera aphidicola subsp. Schizaphis graminum (strain Sg).